Here is a 63-residue protein sequence, read N- to C-terminus: Large ribosomal subunit protein uL29 (63 aa).

It belongs to the universal ribosomal protein uL29 family.

The chain is Large ribosomal subunit protein uL29 from Marinomonas sp. (strain MWYL1).